The following is a 159-amino-acid chain: Neuroglobin (159 aa).

The region spanning 3–151 is the Globin domain; sequence KLSEKDKGLI…VVSAMTRGWA (149 aa). Heme b is bound by residues His-66 and His-98.

Belongs to the globin family. As to quaternary structure, monomer. Homodimers and homotetramers. Mainly monomeric but also detected as part of homodimers and homotetramers. In terms of tissue distribution, detected in brain, eye and gill, but not in muscle and blood (at protein level). Particularly high expression in the periventral zone of tectum opticum, with significant expression detected in white matter, preglomerular nucleus, posterior tubular nucleus, torus longitudinalis, hypothalamus, pituitary gland, posterior tuberculum, hypothalamus, synencephalon and formatio reticularis. Detected also in brain regions of the visual system, predominantly in parts of tectum opticum and torus semicircularis, area dorsalis telencephali and medulla oblongata. Strong expression observed in sensory epithelium of peripheral olfactory organ, and outer and inner nuclear layers and ganglion cell layer of retina.

The protein localises to the cytoplasm. It is found in the cytosol. It localises to the mitochondrion matrix. It carries out the reaction Fe(III)-heme b-[protein] + nitric oxide + H2O = Fe(II)-heme b-[protein] + nitrite + 2 H(+). In terms of biological role, monomeric globin with a bis-histidyl six-coordinate heme-iron atom through which it can bind dioxygen, carbon monoxide and nitric oxide. Could help transport oxygen and increase its availability to the metabolically active neuronal tissues, though its low quantity in tissues as well as its high affinity for dioxygen, which may limit its oxygen-releasing ability, argue against it. The ferrous/deoxygenated form exhibits a nitrite reductase activity and it could produce nitric oxide which in turn inhibits cellular respiration in response to hypoxia. In its ferrous/deoxygenated state, it may also exhibit GDI (Guanine nucleotide Dissociation Inhibitor) activity toward heterotrimeric G-alpha proteins, thereby regulating signal transduction to facilitate neuroprotective responses in the wake of hypoxia and associated oxidative stress. The polypeptide is Neuroglobin (ngb) (Danio rerio (Zebrafish)).